A 119-amino-acid chain; its full sequence is uncharacterized protein (119 aa).

The first 23 residues, 1 to 23, serve as a signal peptide directing secretion; that stretch reads MVKWAVSILVNALLLIVIDGYID. 3 helical membrane-spanning segments follow: residues 27 to 47, 50 to 70, and 88 to 108; these read ISSIGAAIIASLILSILNVLI, LLIIFTLPVTMVTLGLFLFVI, and IDGFGTAIWASVILSVFHLLI.

The protein resides in the cell membrane. This is an uncharacterized protein from Bacillus subtilis (strain 168).